The primary structure comprises 710 residues: MPVRRYGGRYNSSSPGVSNALNPSRTAGWPLSPSPATGSKPASTHHDPVPQEAYYVKDEADARHQQQAPLREPSVEVEVEIIDDEPPRGSQKPLSVAPCTANANNSSGGSKCNAITASRYTFYTNAYQKSVYEALRSLRPLPELQEPRRVKEYAETSLKDSLYRIVEAHDVIMVAGAFFGDEGKGKTVDAVARHPLCTCIARVNSGENAGHTVYDKAGRKFVFNLAPSGLLLPGKRNYIGPECVMDPVSFMEKEVIQLIDAGIDYRDRLFIGNVCIVTPYHKLLDLLGSAANSSTLKGMAPVHGSKVMKRGIRLDHIFNDDETLRKRLEKDMDTYFGLLKVKNLSDADVVRLCREENSDGVVRVPDYVIAFAQAEDKVEFLVKLYRDRVRHNPGFPARCDVTYELHAALLRGEKVLLEGPQSYWLSNARTKFWESTTSADTTAAGLLAASQLNFQKFKSVVLNVHKAPGSSRVGIGACPSSFVPQDYFSAQNIKTLRDLPSATCAHFEAVQRTLFRDGFPHSNDKARHNGIMAPVEYSDETGTYNIGVAMAIASAQHHGECGAVTKKPRVCGFFDCVLHHEVNNIQGPYLTISALDRGDEYDKVGVTIAYVYYSPEGKQVDVNGHVYKNGDIIRAGDPVPSEPALYHCHPIVKLIDGWRDNPIAAAKRRRNAPLPRGVCELLSAIEYFTNCKILSIGNGPNGDDIIYLRQ.

A disordered region spans residues 1 to 54 (MPVRRYGGRYNSSSPGVSNALNPSRTAGWPLSPSPATGSKPASTHHDPVPQEAY). The segment covering 10–25 (YNSSSPGVSNALNPSR) has biased composition (polar residues). A compositionally biased stretch (basic and acidic residues) spans 44 to 54 (THHDPVPQEAY). GTP contacts are provided by residues 180–186 (GDEGKGK) and 210–212 (GHT). Asp-181 functions as the Proton acceptor in the catalytic mechanism. Residues Asp-181 and Gly-210 each contribute to the Mg(2+) site. IMP contacts are provided by residues 181-184 (DEGK), 208-211 (NAGH), Thr-295, Lys-309, Gln-421, Thr-437, and Lys-567. His-211 functions as the Proton donor in the catalytic mechanism. 563 to 569 (AVTKKPR) is a substrate binding site. GTP contacts are provided by residues Arg-569 and 697-699 (GNG).

This sequence belongs to the adenylosuccinate synthetase family. Homodimer. Mg(2+) is required as a cofactor.

It is found in the cytoplasm. It catalyses the reaction IMP + L-aspartate + GTP = N(6)-(1,2-dicarboxyethyl)-AMP + GDP + phosphate + 2 H(+). Its pathway is purine metabolism; AMP biosynthesis via de novo pathway; AMP from IMP: step 1/2. Its function is as follows. Plays an important role in the salvage pathway for purine nucleotide biosynthesis. Catalyzes the first committed step in the biosynthesis of AMP from IMP. This is Adenylosuccinate synthetase from Leishmania major.